Here is a 245-residue protein sequence, read N- to C-terminus: MDGWQRAFVLHSRPWSETSLMLDVFTEESGRVRLVAKGARSKRSNLKGALQPFTPLLVRFGGRGEVKTLRSAEAVSLALPLSGITLYSGLYVNELISRVLEHETRFSELFFDYLHCIQALAGASGSPEPALRRFELALLGHLGYGVDFLHCAGSGEPVDDTMTYRYREEKGFIASLVIDNNTFTGHHLKALASREFPDVDTLRAAKRFTRIALKPYLGGKPLKSRELFRQFMPARKARADNTNND.

It belongs to the RecO family.

Functionally, involved in DNA repair and RecF pathway recombination. This chain is DNA repair protein RecO, found in Klebsiella pneumoniae subsp. pneumoniae (strain ATCC 700721 / MGH 78578).